Here is a 61-residue protein sequence, read N- to C-terminus: Large ribosomal subunit protein bL28 (61 aa).

This sequence belongs to the bacterial ribosomal protein bL28 family.

The polypeptide is Large ribosomal subunit protein bL28 (Geobacillus kaustophilus (strain HTA426)).